The sequence spans 330 residues: MKKSFILQQQEISFAKNTFTEKLIEHLGIIEVQGPILSQVGNGIQDNLSGTEKAVQVNVKQITDAKFEVVHSLAKWKRHTLARFNFAENEGLFVHMKALRPDEDSLDQTHSVYVDQWDWEKVIPTGRRNLAYLKETVRSIYQAILETEDAVHQKFGLSKFLPREITFIHSEELVQRYPELNDKQRENAICKEYGAVFLMGIGGVLSDGKPHDKRAPDYDDWTTPSEGEYLGLNGDILVWNPVLERAFEVSSMGIRVDETALRKQLALTGDEDRLQFDWHQDLVNGRLPLSIGGGIGQSRLAMLLLQKKHIGEVQSSVWPKVVTEQFENIL.

This sequence belongs to the class-II aminoacyl-tRNA synthetase family. AsnA subfamily.

It localises to the cytoplasm. It catalyses the reaction L-aspartate + NH4(+) + ATP = L-asparagine + AMP + diphosphate + H(+). The protein operates within amino-acid biosynthesis; L-asparagine biosynthesis; L-asparagine from L-aspartate (ammonia route): step 1/1. The polypeptide is Aspartate--ammonia ligase (Histophilus somni (strain 2336) (Haemophilus somnus)).